The sequence spans 354 residues: S-adenosylmethionine-dependent nucleotide dehydratase RSAD2 (354 aa).

Residues 62 to 282 (AMTPTSVNYH…LDRHSSISCL (221 aa)) form the Radical SAM core domain. Residues Cys-76, Cys-80, and Cys-83 each contribute to the [4Fe-4S] cluster site.

The protein belongs to the radical SAM superfamily. RSAD2 family. [4Fe-4S] cluster serves as cofactor. In terms of tissue distribution, constitutively expressed in spleen, head kidney and trunk kidney. Following viral infection, detected in most organs including liver, gill, intestine, heart, muscle and brain.

Its subcellular location is the endoplasmic reticulum membrane. Its function is as follows. Interferon-inducible iron-sulfur (4FE-4S) cluster-binding antiviral protein which plays a major role in the cell antiviral state induced by type I and type II interferon. This is S-adenosylmethionine-dependent nucleotide dehydratase RSAD2 from Siniperca chuatsi (Mandarin fish).